Consider the following 874-residue polypeptide: Alanine--tRNA ligase (874 aa).

Residues His562, His566, Cys665, and His669 each contribute to the Zn(2+) site.

This sequence belongs to the class-II aminoacyl-tRNA synthetase family. Zn(2+) is required as a cofactor.

Its subcellular location is the cytoplasm. The catalysed reaction is tRNA(Ala) + L-alanine + ATP = L-alanyl-tRNA(Ala) + AMP + diphosphate. In terms of biological role, catalyzes the attachment of alanine to tRNA(Ala) in a two-step reaction: alanine is first activated by ATP to form Ala-AMP and then transferred to the acceptor end of tRNA(Ala). Also edits incorrectly charged Ser-tRNA(Ala) and Gly-tRNA(Ala) via its editing domain. In Pseudomonas paraeruginosa (strain DSM 24068 / PA7) (Pseudomonas aeruginosa (strain PA7)), this protein is Alanine--tRNA ligase.